We begin with the raw amino-acid sequence, 376 residues long: Protein STRICTOSIDINE SYNTHASE-LIKE 2 (376 aa).

The N-terminal stretch at 1–23 is a signal peptide; that stretch reads MMKLLLVVATSVALIFSVTDLSG. Residues N79 and N244 are each glycosylated (N-linked (GlcNAc...) asparagine).

This sequence belongs to the strictosidine synthase family.

It localises to the vacuole. The polypeptide is Protein STRICTOSIDINE SYNTHASE-LIKE 2 (Arabidopsis thaliana (Mouse-ear cress)).